Consider the following 417-residue polypeptide: Gamma-glutamyl phosphate reductase (417 aa).

This sequence belongs to the gamma-glutamyl phosphate reductase family.

The protein localises to the cytoplasm. It carries out the reaction L-glutamate 5-semialdehyde + phosphate + NADP(+) = L-glutamyl 5-phosphate + NADPH + H(+). It participates in amino-acid biosynthesis; L-proline biosynthesis; L-glutamate 5-semialdehyde from L-glutamate: step 2/2. Catalyzes the NADPH-dependent reduction of L-glutamate 5-phosphate into L-glutamate 5-semialdehyde and phosphate. The product spontaneously undergoes cyclization to form 1-pyrroline-5-carboxylate. In Enterococcus faecalis (strain ATCC 700802 / V583), this protein is Gamma-glutamyl phosphate reductase.